The following is a 558-amino-acid chain: Phosphatase and actin regulator 3 (558 aa).

Over residues 1–11 (MAASEDGSSCL) the composition is skewed to polar residues. 3 disordered regions span residues 1-69 (MAAS…KLAT), 81-288 (KKKN…RPLP), and 300-366 (LATK…ENLM). Residues 18–33 (QSDPSFLSDSSATSTD) are compositionally biased toward low complexity. At threonine 69 the chain carries Phosphothreonine. An RPEL 1 repeat occupies 92 to 117 (SALEKKMAGRQGREELIKQGLLEMME). Residues 94-108 (LEKKMAGRQGREELI) show a composition bias toward basic and acidic residues. The span at 144–169 (ETLTSEGAQPGSPSASGTDQVSQDEL) shows a compositional bias: polar residues. The span at 228–239 (PSPPLLPTPPPK) shows a compositional bias: pro residues. Phosphoserine is present on serine 229. Residue threonine 235 is modified to Phosphothreonine. 2 stretches are compositionally biased toward basic and acidic residues: residues 300–341 (LATK…RDEA) and 354–363 (ATKDSEENKE). RPEL repeat units follow at residues 400–425 (ELLA…PRRT), 438–463 (MKLS…KQRN), and 476–501 (QRLT…IRFS). Residues 449-485 (AVEELERRNILKQRNDQTEQEERREIKQRLTRKLNQR) are a coiled coil.

It belongs to the phosphatase and actin regulator family. Binds PPP1CA and actin; thus inhibiting the protein phosphatase 1 (PP1) activity.

Its subcellular location is the nucleus matrix. The protein is Phosphatase and actin regulator 3 (Phactr3) of Mus musculus (Mouse).